Here is a 930-residue protein sequence, read N- to C-terminus: Isoleucine--tRNA ligase (930 aa).

Positions 57–67 match the 'HIGH' region motif; that stretch reads PYANGHLHIGH. Position 573 (Glu-573) interacts with L-isoleucyl-5'-AMP. Positions 614–618 match the 'KMSKS' region motif; the sequence is KMSKS. Lys-617 is a binding site for ATP. Cys-902, Cys-905, Cys-918, and Cys-921 together coordinate Zn(2+).

The protein belongs to the class-I aminoacyl-tRNA synthetase family. IleS type 1 subfamily. Monomer. Zn(2+) serves as cofactor.

It is found in the cytoplasm. It catalyses the reaction tRNA(Ile) + L-isoleucine + ATP = L-isoleucyl-tRNA(Ile) + AMP + diphosphate. Functionally, catalyzes the attachment of isoleucine to tRNA(Ile). As IleRS can inadvertently accommodate and process structurally similar amino acids such as valine, to avoid such errors it has two additional distinct tRNA(Ile)-dependent editing activities. One activity is designated as 'pretransfer' editing and involves the hydrolysis of activated Val-AMP. The other activity is designated 'posttransfer' editing and involves deacylation of mischarged Val-tRNA(Ile). This Helicobacter hepaticus (strain ATCC 51449 / 3B1) protein is Isoleucine--tRNA ligase.